We begin with the raw amino-acid sequence, 784 residues long: Ribosome biogenesis protein BOP1 homolog (784 aa).

Residues 1 to 11 are compositionally biased toward basic residues; that stretch reads MTKKLALKRKG. A disordered region spans residues 1 to 159; that stretch reads MTKKLALKRK…DSDTSDEEDI (159 aa). Composition is skewed to acidic residues over residues 27–36, 45–54, 62–73, and 84–111; these read SENEEEEEDL, EDSTDDEGID, SEELQFESDEEG, and AEEDEESSDEDDDEEEGSSDEEGEEDEE. Residues 112 to 123 are compositionally biased toward basic and acidic residues; sequence KDSKSKQADDKP. The segment covering 124-133 has biased composition (low complexity); sequence SSSGAASKKA. Over residues 138–148 the composition is skewed to basic and acidic residues; sequence LSKRDTSKPEY. Residues 149–158 show a composition bias toward acidic residues; sequence QDSDTSDEED. WD repeat units lie at residues 445-486, 488-526, 570-612, 615-653, 656-695, 699-738, and 754-784; these read GHTD…RTIE, DEVVRCVAWCPNPKLSIIAVATGNRLLLVNPKVGDKVLV, THFK…SQIP, KSKGLIQFVLFHPVKPCFFVATQHNIRIYDLVKQELVKK, TNSKWISGMSIHPKGDNLLVSTYDKKMLWFDLDLSTKPYQ, LHRNAVRSVAFHLRYPLFASGSDDQAVIVSHGMVYNDLLQ, and RDEFGVLDVNWHPVQPWIFSTGADSTIRLYT.

It belongs to the WD repeat BOP1/ERB1 family.

It is found in the nucleus. Its subcellular location is the nucleolus. The protein resides in the nucleoplasm. Required for maturation of ribosomal RNAs and formation of the large ribosomal subunit. The chain is Ribosome biogenesis protein BOP1 homolog from Drosophila yakuba (Fruit fly).